The sequence spans 854 residues: Protein translocase subunit SecA (854 aa).

ATP contacts are provided by residues Gln-81, 99 to 103, and Asp-487; that span reads GEGKT.

Belongs to the SecA family. In terms of assembly, monomer and homodimer. Part of the essential Sec protein translocation apparatus which comprises SecA, SecYEG and auxiliary proteins SecDF. Other proteins may also be involved.

The protein resides in the cell membrane. The protein localises to the cytoplasm. It catalyses the reaction ATP + H2O + cellular proteinSide 1 = ADP + phosphate + cellular proteinSide 2.. Its function is as follows. Part of the Sec protein translocase complex. Interacts with the SecYEG preprotein conducting channel. Has a central role in coupling the hydrolysis of ATP to the transfer of proteins into and across the cell membrane, serving as an ATP-driven molecular motor driving the stepwise translocation of polypeptide chains across the membrane. In Mycoplasma mobile (strain ATCC 43663 / 163K / NCTC 11711) (Mesomycoplasma mobile), this protein is Protein translocase subunit SecA.